Reading from the N-terminus, the 1071-residue chain is ATP-dependent helicase/deoxyribonuclease subunit B (1071 aa).

The protein belongs to the helicase family. AddB/RexB type 2 subfamily. Heterodimer of AddA and RexB. The cofactor is Mg(2+).

Functionally, the heterodimer acts as both an ATP-dependent DNA helicase and an ATP-dependent, dual-direction single-stranded exonuclease. Recognizes the chi site generating a DNA molecule suitable for the initiation of homologous recombination. This subunit has 5' -&gt; 3' nuclease activity but not helicase activity. In Streptococcus pyogenes serotype M3 (strain ATCC BAA-595 / MGAS315), this protein is ATP-dependent helicase/deoxyribonuclease subunit B.